The following is a 245-amino-acid chain: 1-(5-phosphoribosyl)-5-[(5-phosphoribosylamino)methylideneamino] imidazole-4-carboxamide isomerase (245 aa).

The active-site Proton acceptor is the D10. D135 serves as the catalytic Proton donor.

It belongs to the HisA/HisF family.

The protein resides in the cytoplasm. It catalyses the reaction 1-(5-phospho-beta-D-ribosyl)-5-[(5-phospho-beta-D-ribosylamino)methylideneamino]imidazole-4-carboxamide = 5-[(5-phospho-1-deoxy-D-ribulos-1-ylimino)methylamino]-1-(5-phospho-beta-D-ribosyl)imidazole-4-carboxamide. It participates in amino-acid biosynthesis; L-histidine biosynthesis; L-histidine from 5-phospho-alpha-D-ribose 1-diphosphate: step 4/9. The chain is 1-(5-phosphoribosyl)-5-[(5-phosphoribosylamino)methylideneamino] imidazole-4-carboxamide isomerase from Methanosarcina barkeri (strain Fusaro / DSM 804).